Here is a 122-residue protein sequence, read N- to C-terminus: Small ribosomal subunit protein bS16 (122 aa).

The protein belongs to the bacterial ribosomal protein bS16 family.

The protein is Small ribosomal subunit protein bS16 of Prochlorococcus marinus (strain MIT 9313).